We begin with the raw amino-acid sequence, 556 residues long: MKSDIEIAQSANMKKIADIAKELGLGEDDIELYGKYKCKISLDVLKNKHNEADGKLILVTAINPTPAGEGKSTITVGLGQALCKLHKKAVIALREPSLGPVFGIKGGAAGGGYSQVVPMEDINLHFTGDMHAITSANNLLAAAIDNHIHQGNTLKIDSRRILFKRVMDMNDRALRHIVVGMGGKVNGFLREDGFTITVASEIMAILCLSNSLMDLKERFGNILVAYNLDGEPIYCKDLNVHGAMAMLMKDAIKPNLVQTLENTPAIIHGGPFANIAHGCNSILATKMAMKLGDYAITEAGFGADLGAEKFLDIKCRYGNLKPDCIVVVATIRALKHHGGVSKDELSTPDIEALSKGVSNLQKQIENMKKYGVPVVVAINKFITDSDEEVEFIKEFCDKQGVEVALAEVWEKGGEGGIALAEKVINVLDTQKSNFKCLYDEKLSIKEKMDIIAREIYGASGVDYDKSAEKDIKDIEKLGLDKLPICVAKTQYSLSDNPSLLGKPEDFRVNVREVKVSNGAGFIVVLTGNIMTMPGLPKVPAANKMDILEGGTIQGLF.

An ATP-binding site is contributed by 65 to 72 (TPAGEGKS).

It belongs to the formate--tetrahydrofolate ligase family.

It catalyses the reaction (6S)-5,6,7,8-tetrahydrofolate + formate + ATP = (6R)-10-formyltetrahydrofolate + ADP + phosphate. The protein operates within one-carbon metabolism; tetrahydrofolate interconversion. The sequence is that of Formate--tetrahydrofolate ligase from Clostridium novyi (strain NT).